The chain runs to 60 residues: MAKPARHTSKAKRNKRRTHYKLTAPSVQFDETTGDYSRSHRVSLKGYYKGRKIAKANEAK.

Positions 1–20 (MAKPARHTSKAKRNKRRTHY) are enriched in basic residues. The disordered stretch occupies residues 1 to 22 (MAKPARHTSKAKRNKRRTHYKL).

The protein belongs to the bacterial ribosomal protein bL32 family.

The polypeptide is Large ribosomal subunit protein bL32 (Streptococcus agalactiae serotype V (strain ATCC BAA-611 / 2603 V/R)).